Here is a 409-residue protein sequence, read N- to C-terminus: Elongation factor Tu, chloroplastic (409 aa).

The 205-residue stretch at 10-214 (KPHVNIGTIG…AVDTYIPTPE (205 aa)) folds into the tr-type G domain. The tract at residues 19–26 (GHVDHGKT) is G1. 19–26 (GHVDHGKT) contacts GTP. T26 serves as a coordination point for Mg(2+). The G2 stretch occupies residues 60–64 (GITIN). The interval 81-84 (DCPG) is G3. GTP is bound by residues 81 to 85 (DCPGH) and 136 to 139 (NKED). Positions 136-139 (NKED) are G4. Residues 174–176 (SAL) form a G5 region.

The protein belongs to the TRAFAC class translation factor GTPase superfamily. Classic translation factor GTPase family. EF-Tu/EF-1A subfamily.

It localises to the plastid. The protein localises to the chloroplast. The enzyme catalyses GTP + H2O = GDP + phosphate + H(+). Its function is as follows. GTP hydrolase that promotes the GTP-dependent binding of aminoacyl-tRNA to the A-site of ribosomes during protein biosynthesis. This is Elongation factor Tu, chloroplastic (tufA) from Pyropia yezoensis (Susabi-nori).